The sequence spans 297 residues: F-box only protein 2 (297 aa).

The interval 1–42 is disordered; the sequence is MDGDGDPESVGQPEEASPEEQQEEACAEEANGGEERPEDDGE. Positions 16 to 27 are enriched in acidic residues; it reads ASPEEQQEEACA. In terms of domain architecture, F-box spans 45-92; that stretch reads AAYLDELPEPLLLRVLAELPAAQLVQACRLVCLRWKELVDGAPLWLLK. The region spanning 114-297 is the FBA domain; sequence FYFLSKRRRN…VTNSSVWVEP (184 aa). Residues 211-213 and 279-280 contribute to the a carbohydrate site; these read RRD and YW.

In terms of assembly, component of the SCF(FBXO2) complex consisting of CUL1, RBX1, SKP1 and FBXO2. Predominantly detected as heterodimer with SKP1; the heterodimer with SKP1 is not part of the SCF(FBXO2) complex.

The protein resides in the cytoplasm. Its subcellular location is the microsome membrane. The protein operates within protein modification; protein ubiquitination. In terms of biological role, substrate recognition component of a SCF (SKP1-CUL1-F-box protein) E3 ubiquitin-protein ligase complex that mediates the ubiquitination and subsequent proteasomal degradation of target proteins. Involved in the endoplasmic reticulum-associated degradation pathway (ERAD) for misfolded lumenal proteins by recognizing and binding sugar chains on unfolded glycoproteins that are retrotranslocated into the cytosol and promoting their ubiquitination and subsequent degradation. Prevents formation of cytosolic aggregates of unfolded glycoproteins that have been retrotranslocated into the cytosol. Able to recognize and bind denatured glycoproteins, preferentially those of the high-mannose type. This chain is F-box only protein 2 (FBXO2), found in Bos taurus (Bovine).